We begin with the raw amino-acid sequence, 1300 residues long: uncharacterized protein (1300 aa).

The signal sequence occupies residues 1-26 (MGYKLKRWPLVAFTFTGIGLGVVLAA). Cys-27 carries N-palmitoyl cysteine lipidation. Residue Cys-27 is the site of S-diacylglycerol cysteine attachment. A compositionally biased stretch (low complexity) spans 464-478 (AMAAASTGADSSSGT). Disordered stretches follow at residues 464–487 (AMAA…SGGN), 620–639 (ASVS…DTQE), 774–797 (DSQK…NDKK), and 1244–1269 (KMSD…SPRT). Polar residues-rich tracts occupy residues 620–637 (ASVS…STDT) and 774–783 (DSQKSTNTVK). Basic and acidic residues predominate over residues 785-797 (PDIKPTRENNDKK). A compositionally biased stretch (basic residues) spans 1257–1269 (TIRKPKPHHSPRT).

The protein belongs to the MG307/MG309/MG338 family.

The protein localises to the cell membrane. This is an uncharacterized protein from Mycoplasma pneumoniae (strain ATCC 29342 / M129 / Subtype 1) (Mycoplasmoides pneumoniae).